The primary structure comprises 213 residues: Peptide methionine sulfoxide reductase MsrA (213 aa).

C52 is a catalytic residue.

It belongs to the MsrA Met sulfoxide reductase family.

It catalyses the reaction L-methionyl-[protein] + [thioredoxin]-disulfide + H2O = L-methionyl-(S)-S-oxide-[protein] + [thioredoxin]-dithiol. The catalysed reaction is [thioredoxin]-disulfide + L-methionine + H2O = L-methionine (S)-S-oxide + [thioredoxin]-dithiol. In terms of biological role, has an important function as a repair enzyme for proteins that have been inactivated by oxidation. Catalyzes the reversible oxidation-reduction of methionine sulfoxide in proteins to methionine. The chain is Peptide methionine sulfoxide reductase MsrA from Enterobacter sp. (strain 638).